The chain runs to 318 residues: MSNIIKYKKKILNGDLLTKEEVEEILEEDITDLAATANEIRESLCGNKFDLCTIINGKSGRCQENCKYCAQSAHFDTDIIEYNILNSDRIINSAISNYNKGVHRFSVVTSGRALNNNEVDTLCKTYSKLKETCSIRLCASHGLLKYEDLKRLKDSGVTRYHNNLETSRKFFTKICTTHKYDDKIETIKNAKKAGLEICSGGIIGLGETMEDRIDMAFTLRELSVESVPVNILNPIKGTPLENQEILSYEEIIKTLALFRFILPTVQIRLAGGRTIISDNGKKALESGVNGAISGDMLTTLGIETSEDIKMIKNLGFEV.

The region spanning 44-273 (LCGNKFDLCT…TVQIRLAGGR (230 aa)) is the Radical SAM core domain. Residues Cys-62, Cys-66, and Cys-69 each contribute to the [4Fe-4S] cluster site. Ser-106, Cys-138, Cys-198, and Arg-268 together coordinate [2Fe-2S] cluster.

Belongs to the radical SAM superfamily. Biotin synthase family. In terms of assembly, homodimer. [4Fe-4S] cluster is required as a cofactor. Requires [2Fe-2S] cluster as cofactor.

It carries out the reaction (4R,5S)-dethiobiotin + (sulfur carrier)-SH + 2 reduced [2Fe-2S]-[ferredoxin] + 2 S-adenosyl-L-methionine = (sulfur carrier)-H + biotin + 2 5'-deoxyadenosine + 2 L-methionine + 2 oxidized [2Fe-2S]-[ferredoxin]. It functions in the pathway cofactor biosynthesis; biotin biosynthesis; biotin from 7,8-diaminononanoate: step 2/2. Catalyzes the conversion of dethiobiotin (DTB) to biotin by the insertion of a sulfur atom into dethiobiotin via a radical-based mechanism. The sequence is that of Biotin synthase from Clostridium botulinum (strain Langeland / NCTC 10281 / Type F).